A 272-amino-acid chain; its full sequence is UPF0759 protein YecE (272 aa).

Belongs to the UPF0759 family.

The sequence is that of UPF0759 protein YecE (yecE) from Escherichia coli (strain K12).